The chain runs to 481 residues: tRNA sulfurtransferase (481 aa).

Residues 54-156 (ADGDGPLRHI…GKDVFFYHEI (103 aa)) form the THUMP domain. ATP-binding positions include 174-175 (LV), K256, G278, and Q287. Residues C334 and C433 are joined by a disulfide bond. In terms of domain architecture, Rhodanese spans 388–463 (IPKDAVIIDL…YYSTFSDLKK (76 aa)). C433 functions as the Cysteine persulfide intermediate in the catalytic mechanism.

The protein belongs to the ThiI family.

It is found in the cytoplasm. The catalysed reaction is [ThiI sulfur-carrier protein]-S-sulfanyl-L-cysteine + a uridine in tRNA + 2 reduced [2Fe-2S]-[ferredoxin] + ATP + H(+) = [ThiI sulfur-carrier protein]-L-cysteine + a 4-thiouridine in tRNA + 2 oxidized [2Fe-2S]-[ferredoxin] + AMP + diphosphate. It carries out the reaction [ThiS sulfur-carrier protein]-C-terminal Gly-Gly-AMP + S-sulfanyl-L-cysteinyl-[cysteine desulfurase] + AH2 = [ThiS sulfur-carrier protein]-C-terminal-Gly-aminoethanethioate + L-cysteinyl-[cysteine desulfurase] + A + AMP + 2 H(+). It functions in the pathway cofactor biosynthesis; thiamine diphosphate biosynthesis. Its function is as follows. Catalyzes the ATP-dependent transfer of a sulfur to tRNA to produce 4-thiouridine in position 8 of tRNAs, which functions as a near-UV photosensor. Also catalyzes the transfer of sulfur to the sulfur carrier protein ThiS, forming ThiS-thiocarboxylate. This is a step in the synthesis of thiazole, in the thiamine biosynthesis pathway. The sulfur is donated as persulfide by IscS. In Thermoplasma acidophilum (strain ATCC 25905 / DSM 1728 / JCM 9062 / NBRC 15155 / AMRC-C165), this protein is tRNA sulfurtransferase.